We begin with the raw amino-acid sequence, 275 residues long: Elongation factor Ts (275 aa).

Residues Thr-76–Val-79 are involved in Mg(2+) ion dislocation from EF-Tu.

The protein belongs to the EF-Ts family.

The protein localises to the cytoplasm. Functionally, associates with the EF-Tu.GDP complex and induces the exchange of GDP to GTP. It remains bound to the aminoacyl-tRNA.EF-Tu.GTP complex up to the GTP hydrolysis stage on the ribosome. The polypeptide is Elongation factor Ts (Corynebacterium kroppenstedtii (strain DSM 44385 / JCM 11950 / CIP 105744 / CCUG 35717)).